The chain runs to 72 residues: METQKLISMVKEALEKYQYPLTAKNIKVVIQKEHNVILPTGSINSILYSNPELFEKIDKTNTIYPPLWIRKN.

It belongs to the asfivirus I73R family.

It is found in the virion. This is an uncharacterized protein from Ornithodoros (relapsing fever ticks).